A 61-amino-acid polypeptide reads, in one-letter code: Toxin S5C1 (61 aa).

Disulfide bonds link C3-C22, C16-C39, C41-C53, and C54-C59. The short motif at 45-47 is the Cell attachment site element; that stretch reads RGD.

The protein belongs to the three-finger toxin family. Short-chain subfamily. Antiplatelet toxin sub-subfamily. As to expression, expressed by the venom gland.

The protein localises to the secreted. Inhibits ADP-induced platelet aggregation and inhibits the binding of purified platelet fibrinogen receptor alpha-IIb/beta-3 (ITGA2B/ITGB3) to immobilized fibrinogen. The polypeptide is Toxin S5C1 (Dendroaspis jamesoni kaimosae (Eastern Jameson's mamba)).